A 152-amino-acid polypeptide reads, in one-letter code: Siroheme decarboxylase beta subunit (152 aa).

It belongs to the Ahb/Nir family. Forms a heterodimer composed of AhbA and AhbB.

It catalyses the reaction siroheme + 2 H(+) = 12,18-didecarboxysiroheme + 2 CO2. It functions in the pathway porphyrin-containing compound metabolism; protoheme biosynthesis. Its activity is regulated as follows. Binds heme b. The redox state of the heme b modulates the activity of the enzyme. Activity is stimulated by sodium dithionite. Involved in siroheme-dependent heme b biosynthesis. Catalyzes the decarboxylation of siroheme into didecarboxysiroheme. This chain is Siroheme decarboxylase beta subunit, found in Methanosarcina barkeri (strain Fusaro / DSM 804).